Reading from the N-terminus, the 196-residue chain is MAQILTPDALATLFTDARTHNGWLDKPVEDALLKQAYHLARMGPTSANCCPARFVFICSSEAKERLKPALSSGNLAKTLQAPVTAIVAYDPVFYDALPKLFPQSDARSWFTSSPELATETAFRNSSLQAAYLIIACRALGLDTGPMSGFNNAQVDEIFLAEKGWKSNLLVNIGYGDINKLYERAPRLAFDEACQVL.

The protein belongs to the nitroreductase family. HadB/RutE subfamily. The cofactor is FMN.

The catalysed reaction is 3-hydroxypropanoate + NADP(+) = 3-oxopropanoate + NADPH + H(+). In terms of biological role, may reduce toxic product malonic semialdehyde to 3-hydroxypropionic acid, which is excreted. The chain is Probable malonic semialdehyde reductase RutE from Yersinia enterocolitica serotype O:8 / biotype 1B (strain NCTC 13174 / 8081).